A 532-amino-acid polypeptide reads, in one-letter code: Eukaryotic translation initiation factor 4B1 (532 aa).

Disordered regions lie at residues 16–365 (EAER…LEEQ), 401–434 (KKLE…IIRG), and 451–532 (RFRQ…REGW). A compositionally biased stretch (low complexity) spans 26-35 (AEATAATADT). Composition is skewed to gly residues over residues 105–120 (RLGG…SGGR) and 132–147 (WSGG…YGGG). The span at 167–180 (RADEVDDWGKEKKP) shows a compositional bias: basic and acidic residues. The Nuclear localization signal 1 signature appears at 177–184 (EKKPLPSF). A compositionally biased stretch (gly residues) spans 193 to 217 (SGDGGGFGGGGSGFGGGGGGGGGGL). Positions 237–244 (SSTFGSSF) match the Nuclear localization signal 2 motif. The span at 237 to 247 (SSTFGSSFGDS) shows a compositional bias: low complexity. 2 stretches are compositionally biased toward basic and acidic residues: residues 249 to 263 (QEER…RKVE) and 286 to 310 (RPRE…EAKK). Low complexity predominate over residues 315–337 (TSRPTSAHSSRPSSAQSNRSESS). Basic and acidic residues-rich tracts occupy residues 355–365 (AKPREVLLEEQ), 401–416 (KKLE…KESD), 472–494 (ERTH…ERPR), and 507–520 (NEQR…KERG).

The protein belongs to the eIF-4 subunit B family. As to quaternary structure, homodimer. Nonspherical monomer. mRNA-discriminating component of initiation complexes. Post-translationally, phosphorylated.

It is found in the nucleus. Promotes the eIF4F and eIF4A RNA-dependent ATP-hydrolysis activity with different efficiency depending on mRNAs, thus providing mRNA discrimination during initiation of translation. This chain is Eukaryotic translation initiation factor 4B1, found in Arabidopsis thaliana (Mouse-ear cress).